The primary structure comprises 613 residues: Leucine-rich repeat and immunoglobulin-like domain-containing nogo receptor-interacting protein 1 (613 aa).

A signal peptide spans 1-34 (MLAGEASMRSPILACWQPILLLMLGSILSGSATG). Cystine bridges form between Cys-35–Cys-41 and Cys-39–Cys-50. Positions 35-64 (CPPRCECSAQERAVLCHRKRFMVVPEGIPT) constitute an LRRNT domain. Over 35 to 554 (CPPRCECSAQ…FDIKTLIIAT (520 aa)) the chain is Extracellular. 11 LRR repeats span residues 65-86 (ETRQ…EFAN), 89-110 (HLEE…AFNN), 113-134 (NLRT…VFTG), 137-158 (NLTK…MFQD), 161-182 (NLKS…AFSG), 185-206 (SLEQ…ALSH), 209-230 (GLIV…SFKR), 257-278 (NLTS…SVRH), 281-302 (YLRF…MLHD), 305-326 (RLQE…AFRG), and 329-350 (YLRI…AFHS). N-linked (GlcNAc...) asparagine glycosylation occurs at Asn-137. N-linked (GlcNAc...) asparagine glycosylation occurs at Asn-195. N-linked (GlcNAc...) asparagine glycosylation is found at Asn-257, Asn-267, and Asn-286. An N-linked (GlcNAc...) asparagine glycan is attached at Asn-334. The region spanning 362 to 416 (NPLACDCRLLWVFRRRWRLNFNKQQPTCSTPEFVQGKEFKDFPDVLLPNYFTCRR) is the LRRCT domain. 3 disulfides stabilise this stretch: Cys-366–Cys-389, Cys-368–Cys-414, and Cys-439–Cys-490. The 105-residue stretch at 404-508 (PDVLLPNYFT…DTMLAHLHVR (105 aa)) folds into the Ig-like C2-type domain. N-linked (GlcNAc...) asparagine glycosylation is found at Asn-485, Asn-498, Asn-519, Asn-530, and Asn-535. A helical transmembrane segment spans residues 555–575 (TMGFISFLGVVLFCLVLLFLW). Residues 576–613 (SRGKGNTKHNIEIEYVPRKSDAGISSADAPRKFNMKMI) are Cytoplasmic-facing.

In terms of assembly, homotetramer. Forms ternary complex with RTN4R/NGFR and RTN4R/TNFRSF19. N-glycosylated. Contains predominantly high-mannose glycans.

It is found in the cell membrane. In terms of biological role, functional component of the Nogo receptor signaling complex (RTN4R/NGFR) in RhoA activation responsible for some inhibition of axonal regeneration by myelin-associated factors. Is also an important negative regulator of oligodentrocyte differentiation and axonal myelination. The sequence is that of Leucine-rich repeat and immunoglobulin-like domain-containing nogo receptor-interacting protein 1 (LINGO1) from Gallus gallus (Chicken).